The primary structure comprises 556 residues: Glucose-6-phosphate isomerase (556 aa).

Glu-364 functions as the Proton donor in the catalytic mechanism. Residues His-395 and Lys-521 contribute to the active site.

The protein belongs to the GPI family.

The protein localises to the cytoplasm. It catalyses the reaction alpha-D-glucose 6-phosphate = beta-D-fructose 6-phosphate. It participates in carbohydrate biosynthesis; gluconeogenesis. The protein operates within carbohydrate degradation; glycolysis; D-glyceraldehyde 3-phosphate and glycerone phosphate from D-glucose: step 2/4. In terms of biological role, catalyzes the reversible isomerization of glucose-6-phosphate to fructose-6-phosphate. The polypeptide is Glucose-6-phosphate isomerase (Corynebacterium kroppenstedtii (strain DSM 44385 / JCM 11950 / CIP 105744 / CCUG 35717)).